Reading from the N-terminus, the 288-residue chain is Acetyl-coenzyme A carboxylase carboxyl transferase subunit beta (288 aa).

Residues 34-288 form the CoA carboxyltransferase N-terminal domain; the sequence is LWVKCSRCNE…ANILSLHGTN (255 aa). Positions 38, 41, 57, and 60 each coordinate Zn(2+). A C4-type zinc finger spans residues 38–60; the sequence is CSRCNEILYTKELDKNFKVCHKC.

This sequence belongs to the AccD/PCCB family. Acetyl-CoA carboxylase is a heterohexamer composed of biotin carboxyl carrier protein (AccB), biotin carboxylase (AccC) and two subunits each of ACCase subunit alpha (AccA) and ACCase subunit beta (AccD). Zn(2+) is required as a cofactor.

It is found in the cytoplasm. The catalysed reaction is N(6)-carboxybiotinyl-L-lysyl-[protein] + acetyl-CoA = N(6)-biotinyl-L-lysyl-[protein] + malonyl-CoA. It functions in the pathway lipid metabolism; malonyl-CoA biosynthesis; malonyl-CoA from acetyl-CoA: step 1/1. Functionally, component of the acetyl coenzyme A carboxylase (ACC) complex. Biotin carboxylase (BC) catalyzes the carboxylation of biotin on its carrier protein (BCCP) and then the CO(2) group is transferred by the transcarboxylase to acetyl-CoA to form malonyl-CoA. In Desulforamulus reducens (strain ATCC BAA-1160 / DSM 100696 / MI-1) (Desulfotomaculum reducens), this protein is Acetyl-coenzyme A carboxylase carboxyl transferase subunit beta.